The primary structure comprises 201 residues: Ribonuclease MRP protein subunit RMP1 (201 aa).

A helical membrane pass occupies residues 86–108 (YWQFNGVIALGQFVTLGCTLVTL).

Component of RNase MRP complex which consists of an RNA moiety and at least 10 protein subunits including POP1, POP3, POP4, POP5, POP6, POP7, POP8, RMP1, RPP1 and SNM1, many of which are shared with the RNase P complex.

The protein resides in the membrane. The protein localises to the cytoplasm. It localises to the nucleus. Functions as part of ribonuclease MRP (RNase MRP), which is involved in rRNA processing in mitochondria. The protein is Ribonuclease MRP protein subunit RMP1 of Saccharomyces cerevisiae (strain ATCC 204508 / S288c) (Baker's yeast).